We begin with the raw amino-acid sequence, 582 residues long: Methionine--tRNA ligase (582 aa).

The short motif at 24–34 is the 'HIGH' region element; it reads PYIYAVPHLGN. The Zn(2+) site is built by Cys-156, Cys-159, Cys-169, and Cys-172. The 'KMSKS' region motif lies at 346–350; the sequence is KFSKS. Lys-349 contacts ATP.

The protein belongs to the class-I aminoacyl-tRNA synthetase family. MetG type 1 subfamily. Zn(2+) is required as a cofactor.

The protein resides in the cytoplasm. The catalysed reaction is tRNA(Met) + L-methionine + ATP = L-methionyl-tRNA(Met) + AMP + diphosphate. Its function is as follows. Is required not only for elongation of protein synthesis but also for the initiation of all mRNA translation through initiator tRNA(fMet) aminoacylation. In Caldivirga maquilingensis (strain ATCC 700844 / DSM 13496 / JCM 10307 / IC-167), this protein is Methionine--tRNA ligase.